The primary structure comprises 419 residues: Delta(8)-fatty-acid desaturase (419 aa).

One can recognise a Cytochrome b5 heme-binding domain in the interval 1-64 (MKSKRQALSP…LKRMPKINPS (64 aa)). Heme contacts are provided by H24 and H47. The chain crosses the membrane as a helical span at residues 110–130 (LGVLGYFLMVQYQMYFIGAVL). A Histidine box-1 motif is present at residues 143 to 147 (HDICH). Residues 156-176 (WNNLVGLVFGNGLQGFSVTCW) form a helical membrane-spanning segment. The Histidine box-2 motif lies at 180–184 (HNAHH). Helical transmembrane passes span 226-246 (YFLVICILLRFIWCFQCVLTV), 266-286 (IGLALHWTLKALFHLFFMPSI), and 290-310 (LLVFFVSELVGGFGIAIVVFM). The Histidine box-3 motif lies at 355 to 359 (QIEHH).

It belongs to the fatty acid desaturase type 1 family. Requires Fe cation as cofactor.

The protein resides in the membrane. The catalysed reaction is an (11Z,14Z)-icosadienoyl-containing glycerolipid + 2 Fe(II)-[cytochrome b5] + O2 + 2 H(+) = an (8Z,11Z,14Z)-icosatrienoyl-containing glycerolipid + 2 Fe(III)-[cytochrome b5] + 2 H2O. It catalyses the reaction an (11Z,14Z,17Z)-icosatrienoyl-containing glycerolipid + 2 Fe(II)-[cytochrome b5] + O2 + 2 H(+) = an (8Z,11Z,14Z,17Z)-eicosatetraenoyl-containing glycerolipid + 2 Fe(III)-[cytochrome b5] + 2 H2O. It carries out the reaction an (11Z)-eicosenoyl-containing glycerolipid + 2 Fe(II)-[cytochrome b5] + O2 + 2 H(+) = a (8Z,11Z)-eicosadienoyl-containing glycerolipid + 2 Fe(III)-[cytochrome b5] + 2 H2O. It participates in lipid metabolism; fatty acid metabolism. Its function is as follows. Delta(8)-fatty-acid desaturase which introduces a double bond at the 8-position in 20-carbon chain length fatty acids (C20) that have an existing delta-11 unsaturation (double bond). Whether it acts on CoA-linked substrates (as in animals) or phospholipid-linked substrates (as in plants and fungi) is still not clear. This is Delta(8)-fatty-acid desaturase (efd1) from Euglena gracilis.